The primary structure comprises 1053 residues: uncharacterized protein (1053 aa).

The protein belongs to the mycobacterial PPE family.

This is an uncharacterized protein from Mycobacterium tuberculosis (strain ATCC 25618 / H37Rv).